Consider the following 783-residue polypeptide: Protein involved in starch initiation 1 (783 aa).

A chloroplast-targeting transit peptide spans Met-1–Val-27. Coiled coils occupy residues Leu-128–Glu-309, Leu-345–Ala-432, and Leu-457–Leu-512.

Interacts with PTST2; the interaction is essential for the initiation of starch granules biosynthesis in leaf chloroplasts. Interacts with SS4; the interaction is essential for the initiation of starch granules biosynthesis in leaf chloroplasts.

The protein localises to the plastid. Its subcellular location is the chloroplast. Its function is as follows. Required for the initiation of starch granules biosynthesis in leaf chloroplasts. Involved in determining starch granule number and size in chloroplasts. In Arabidopsis thaliana (Mouse-ear cress), this protein is Protein involved in starch initiation 1.